The primary structure comprises 341 residues: Farnesyl pyrophosphate synthase 2 (341 aa).

Isopentenyl diphosphate contacts are provided by Lys-46, Arg-49, and Gln-85. Residues Asp-92 and Asp-96 each contribute to the Mg(2+) site. A dimethylallyl diphosphate-binding site is contributed by Arg-101. Isopentenyl diphosphate is bound at residue Arg-102. Lys-189, Thr-190, Gln-228, Lys-245, and Lys-254 together coordinate dimethylallyl diphosphate.

This sequence belongs to the FPP/GGPP synthase family. Requires Mg(2+) as cofactor. Mainly expressed in trichomes, roots and flowers, and, to a lower extent, in leaves and stems.

Its subcellular location is the cytoplasm. The protein resides in the nucleus. It catalyses the reaction isopentenyl diphosphate + dimethylallyl diphosphate = (2E)-geranyl diphosphate + diphosphate. The catalysed reaction is isopentenyl diphosphate + (2E)-geranyl diphosphate = (2E,6E)-farnesyl diphosphate + diphosphate. It participates in isoprenoid biosynthesis; farnesyl diphosphate biosynthesis; farnesyl diphosphate from geranyl diphosphate and isopentenyl diphosphate: step 1/1. It functions in the pathway sesquiterpene biosynthesis. Its pathway is isoprenoid biosynthesis; geranyl diphosphate biosynthesis; geranyl diphosphate from dimethylallyl diphosphate and isopentenyl diphosphate: step 1/1. In terms of biological role, catalyzes the sequential condensation of isopentenyl pyrophosphate with the allylic pyrophosphates, dimethylallyl pyrophosphate, and then with the resultant geranylpyrophosphate to the ultimate product farnesyl pyrophosphate. The protein is Farnesyl pyrophosphate synthase 2 of Cannabis sativa (Hemp).